A 461-amino-acid polypeptide reads, in one-letter code: tRNA modification GTPase MnmE (461 aa).

Residues Arg22, Glu87, and Arg126 each contribute to the (6S)-5-formyl-5,6,7,8-tetrahydrofolate site. The region spanning Gly222 to Ile382 is the TrmE-type G domain. Asn232 lines the K(+) pocket. GTP is bound by residues Asn232 to Ser237, Thr251 to Thr257, Asp276 to Gly279, and Ser363 to Arg365. Ser236 provides a ligand contact to Mg(2+). The K(+) site is built by Thr251, Ile253, and Thr256. Mg(2+) is bound at residue Thr257. Lys461 is a binding site for (6S)-5-formyl-5,6,7,8-tetrahydrofolate.

This sequence belongs to the TRAFAC class TrmE-Era-EngA-EngB-Septin-like GTPase superfamily. TrmE GTPase family. Homodimer. Heterotetramer of two MnmE and two MnmG subunits. The cofactor is K(+).

It is found in the cytoplasm. Its function is as follows. Exhibits a very high intrinsic GTPase hydrolysis rate. Involved in the addition of a carboxymethylaminomethyl (cmnm) group at the wobble position (U34) of certain tRNAs, forming tRNA-cmnm(5)s(2)U34. The protein is tRNA modification GTPase MnmE of Carboxydothermus hydrogenoformans (strain ATCC BAA-161 / DSM 6008 / Z-2901).